The primary structure comprises 502 residues: Chromatin structure-remodeling complex protein RSC58 (502 aa).

Residues 19–134 (SILNAASVKC…KFSSELLLRE (116 aa)) enclose the Bromo domain. Positions 336 to 378 (NEEGINRKQNDENNKNVDGKSNGVQDDGGDNDNDATIASANSE) are disordered. Residues 339-353 (GINRKQNDENNKNVD) show a composition bias toward basic and acidic residues.

In terms of assembly, component of the two forms of the RSC complex composed of at least either RSC1 or RSC2, and ARP7, ARP9, LDB7, NPL6, RSC3, RSC30, RSC4, RSC58, RSC6, RSC8, RSC9, SFH1, STH1, HTL1 and probably RTT102. The complexes interact with histone and histone variant components of centromeric chromatin.

The protein resides in the nucleus. Its function is as follows. Component of the chromatin structure-remodeling complex (RSC), which is involved in transcription regulation and nucleosome positioning. RSC is responsible for the transfer of a histone octamer from a nucleosome core particle to naked DNA. The reaction requires ATP and involves an activated RSC-nucleosome intermediate. Remodeling reaction also involves DNA translocation, DNA twist and conformational change. As a reconfigurer of centromeric and flanking nucleosomes, RSC complex is required both for proper kinetochore function in chromosome segregation and, via a PKC1-dependent signaling pathway, for organization of the cellular cytoskeleton. The sequence is that of Chromatin structure-remodeling complex protein RSC58 (RSC58) from Saccharomyces cerevisiae (strain ATCC 204508 / S288c) (Baker's yeast).